Here is a 103-residue protein sequence, read N- to C-terminus: Integration host factor subunit beta (103 aa).

The tract at residues 62–81 is disordered; that stretch reads RNPKTGESVALPGKHVPHFK.

This sequence belongs to the bacterial histone-like protein family. Heterodimer of an alpha and a beta chain.

Functionally, this protein is one of the two subunits of integration host factor, a specific DNA-binding protein that functions in genetic recombination as well as in transcriptional and translational control. The chain is Integration host factor subunit beta from Xanthomonas campestris pv. campestris (strain B100).